Here is a 239-residue protein sequence, read N- to C-terminus: 1-(5-phosphoribosyl)-5-[(5-phosphoribosylamino)methylideneamino] imidazole-4-carboxamide isomerase (239 aa).

The Proton acceptor role is filled by Asp9. Asp131 (proton donor) is an active-site residue.

Belongs to the HisA/HisF family.

Its subcellular location is the cytoplasm. The catalysed reaction is 1-(5-phospho-beta-D-ribosyl)-5-[(5-phospho-beta-D-ribosylamino)methylideneamino]imidazole-4-carboxamide = 5-[(5-phospho-1-deoxy-D-ribulos-1-ylimino)methylamino]-1-(5-phospho-beta-D-ribosyl)imidazole-4-carboxamide. Its pathway is amino-acid biosynthesis; L-histidine biosynthesis; L-histidine from 5-phospho-alpha-D-ribose 1-diphosphate: step 4/9. This Bacteroides fragilis (strain ATCC 25285 / DSM 2151 / CCUG 4856 / JCM 11019 / LMG 10263 / NCTC 9343 / Onslow / VPI 2553 / EN-2) protein is 1-(5-phosphoribosyl)-5-[(5-phosphoribosylamino)methylideneamino] imidazole-4-carboxamide isomerase.